The following is a 488-amino-acid chain: Cytochrome P450 family 716 subfamily AD polypeptide 2 (488 aa).

Residues 5–25 (LLLLSTLLILTLCCHFFYLFI) traverse the membrane as a helical segment. Position 433 (Cys433) interacts with heme.

It belongs to the cytochrome P450 family. It depends on heme as a cofactor. As to expression, expressed in maturing fruits and in juice vesicles.

The protein localises to the membrane. The enzyme catalyses (1R,2R,3S,8R,10R,11R,15S,16S)-3-(acetyloxy)-15-[(4R)-4-[(2S)-3,3-dimethyloxiran-2-yl]-1,4-dihydroxybutan-2-yl]-2,7,7,11,16-pentamethyl-5-oxo-6-oxatetracyclo[9.7.0.0(2,8).0(12,16)]octadec-12-en-10-yl acetate + reduced [NADPH--hemoprotein reductase] + O2 = (1R,2R,3S,8R,10R,11R,15S,16S)-3-(acetyloxy)-15-(1-hydroxy-4-oxobutan-2-yl)-2,7,7,11,16-pentamethyl-5-oxo-6-oxatetracyclo[9.7.0.0(2,8).0(12,16)]octadec-12-en-10-yl acetate + 2-methylpropanoate + oxidized [NADPH--hemoprotein reductase] + H2O + 2 H(+). The protein operates within secondary metabolite biosynthesis; terpenoid biosynthesis. Functionally, monooxygenase involved in the biosynthesis of limonoids triterpene natural products such as limonin, a compound with insecticidal activity responsible for the bitter taste in citrus. Catalyzes the formation of (1R,2R,3S,8R,10R,11R,15S,16S)-3-(acetyloxy)-15-(1-hydroxy-4-oxobutan-2-yl)-2,7,7,11,16-pentamethyl-5-oxo-6-oxatetracyclo[9.7.0.0(2,8).0(12,16)]octadec-12-en-10-yl acetate. This Citrus sinensis (Sweet orange) protein is Cytochrome P450 family 716 subfamily AD polypeptide 2.